A 584-amino-acid chain; its full sequence is Membrane protein insertase YidC (584 aa).

Helical transmembrane passes span 5 to 25 (SVIG…FMAP), 358 to 378 (FIGN…LVTY), 428 to 448 (LGGC…FYVF), 478 to 498 (IPLY…AVFL), and 516 to 536 (IYIF…GLGL). Residues 563-584 (ALSPVVAAPPKAPKKKKNARKR) form a disordered region. Residues 574-584 (APKKKKNARKR) show a composition bias toward basic residues.

It belongs to the OXA1/ALB3/YidC family. Type 1 subfamily. As to quaternary structure, interacts with the Sec translocase complex via SecD. Specifically interacts with transmembrane segments of nascent integral membrane proteins during membrane integration.

Its subcellular location is the cell inner membrane. In terms of biological role, required for the insertion and/or proper folding and/or complex formation of integral membrane proteins into the membrane. Involved in integration of membrane proteins that insert both dependently and independently of the Sec translocase complex, as well as at least some lipoproteins. Aids folding of multispanning membrane proteins. The protein is Membrane protein insertase YidC of Prosthecochloris aestuarii (strain DSM 271 / SK 413).